A 332-amino-acid chain; its full sequence is 2,3-diketo-L-gulonate reductase (332 aa).

The Proton donor role is filled by histidine 44. Residues isoleucine 168–serine 174, tryptophan 224–lysine 225, and glycine 304–glutamate 306 contribute to the NAD(+) site.

This sequence belongs to the LDH2/MDH2 oxidoreductase family. DlgD subfamily. As to quaternary structure, homodimer.

It is found in the cytoplasm. It carries out the reaction 3-dehydro-L-gulonate + NAD(+) = 2,3-dioxo-L-gulonate + NADH + H(+). The catalysed reaction is 3-dehydro-L-gulonate + NADP(+) = 2,3-dioxo-L-gulonate + NADPH + H(+). Functionally, catalyzes the reduction of 2,3-diketo-L-gulonate in the presence of NADH, to form 3-keto-L-gulonate. In Escherichia coli O17:K52:H18 (strain UMN026 / ExPEC), this protein is 2,3-diketo-L-gulonate reductase.